We begin with the raw amino-acid sequence, 119 residues long: Protein Wnt-4 (119 aa).

The O-palmitoleoyl serine; by PORCN moiety is linked to residue S1. Cystine bridges form between C69–C100 and C85–C95. N-linked (GlcNAc...) asparagine glycosylation occurs at N86.

This sequence belongs to the Wnt family. Post-translationally, palmitoleoylation is required for efficient binding to frizzled receptors. Depalmitoleoylation leads to Wnt signaling pathway inhibition.

It is found in the secreted. Its subcellular location is the extracellular space. It localises to the extracellular matrix. In terms of biological role, ligand for members of the frizzled family of seven transmembrane receptors. Plays an important role in embryonic development. This chain is Protein Wnt-4 (WNT4), found in Meleagris gallopavo (Wild turkey).